Reading from the N-terminus, the 602-residue chain is Multiple epidermal growth factor-like domains protein 9 (602 aa).

A signal peptide spans 1–30 (MNGGAERAMRSLPSLGGLALLCCAAAAAAA). The Extracellular segment spans residues 31–514 (AVASAASAGN…LADVSWTQFN (484 aa)). Residues 38–199 (AGNVTGGGGA…PATEAPSSPP (162 aa)) form a disordered region. N-linked (GlcNAc...) asparagine glycosylation occurs at asparagine 40. 2 stretches are compositionally biased toward low complexity: residues 68–85 (PRATAPTAQAPRTGPPRA) and 139–166 (APTRPAPTTLSTTTGPAPTTPVATTVPA). Residues 167–176 (PTTPRTPTPD) show a composition bias toward pro residues. N-linked (GlcNAc...) asparagine glycosylation occurs at asparagine 182. The span at 187–199 (PTPPATEAPSSPP) shows a compositional bias: pro residues. 20 disulfide bridges follow: cysteine 204–cysteine 217, cysteine 206–cysteine 224, cysteine 226–cysteine 235, cysteine 238–cysteine 251, cysteine 254–cysteine 266, cysteine 256–cysteine 272, cysteine 274–cysteine 283, cysteine 286–cysteine 298, cysteine 301–cysteine 310, cysteine 303–cysteine 317, cysteine 320–cysteine 329, cysteine 332–cysteine 346, cysteine 349–cysteine 360, cysteine 351–cysteine 371, cysteine 374–cysteine 383, cysteine 386–cysteine 397, cysteine 400–cysteine 415, cysteine 402–cysteine 422, cysteine 425–cysteine 434, and cysteine 437–cysteine 449. 5 consecutive Laminin EGF-like domains span residues 204–253 (CNCS…LCQP), 254–300 (CDCS…GCLP), 301–348 (CQCN…ECLR), 349–399 (CPCS…ICRK), and 400–451 (CQCH…NCIK). Asparagine 205 and asparagine 218 each carry an N-linked (GlcNAc...) asparagine glycan. Asparagine 245 carries N-linked (GlcNAc...) asparagine glycosylation. Asparagine 267 carries an N-linked (GlcNAc...) asparagine glycan. The N-linked (GlcNAc...) asparagine glycan is linked to asparagine 305. N-linked (GlcNAc...) asparagine glycosylation occurs at asparagine 428. N-linked (GlcNAc...) asparagine glycosylation is found at asparagine 468, asparagine 481, and asparagine 500. Residues 515–535 (IIILTVIIIVVVLLMGFVGAV) form a helical membrane-spanning segment. Topologically, residues 536-602 (YMYREYQNRK…LTTPIHNYKA (67 aa)) are cytoplasmic.

Its subcellular location is the membrane. The polypeptide is Multiple epidermal growth factor-like domains protein 9 (MEGF9) (Homo sapiens (Human)).